A 320-amino-acid chain; its full sequence is tRNA dimethylallyltransferase (320 aa).

10-17 lines the ATP pocket; sequence GPTASGKT. Residue 12 to 17 participates in substrate binding; that stretch reads TASGKT. Interaction with substrate tRNA stretches follow at residues 35–38, 159–163, and 241–246; these read DSAL, QRIQR, and RCVGYR.

It belongs to the IPP transferase family. In terms of assembly, monomer. Mg(2+) is required as a cofactor.

It carries out the reaction adenosine(37) in tRNA + dimethylallyl diphosphate = N(6)-dimethylallyladenosine(37) in tRNA + diphosphate. Its function is as follows. Catalyzes the transfer of a dimethylallyl group onto the adenine at position 37 in tRNAs that read codons beginning with uridine, leading to the formation of N6-(dimethylallyl)adenosine (i(6)A). The polypeptide is tRNA dimethylallyltransferase (Aromatoleum aromaticum (strain DSM 19018 / LMG 30748 / EbN1) (Azoarcus sp. (strain EbN1))).